A 126-amino-acid polypeptide reads, in one-letter code: Fluoride-specific ion channel FluC (126 aa).

4 consecutive transmembrane segments (helical) span residues valine 5–tryptophan 25, tryptophan 35–phenylalanine 55, phenylalanine 68–phenylalanine 88, and alanine 99–leucine 119. Residues glycine 75 and threonine 78 each contribute to the Na(+) site.

It belongs to the fluoride channel Fluc/FEX (TC 1.A.43) family.

Its subcellular location is the cell inner membrane. It catalyses the reaction fluoride(in) = fluoride(out). Na(+) is not transported, but it plays an essential structural role and its presence is essential for fluoride channel function. In terms of biological role, fluoride-specific ion channel. Important for reducing fluoride concentration in the cell, thus reducing its toxicity. In Marinobacter nauticus (strain ATCC 700491 / DSM 11845 / VT8) (Marinobacter aquaeolei), this protein is Fluoride-specific ion channel FluC.